The chain runs to 311 residues: Beta-lactamase (311 aa).

Positions 1–34 form a signal peptide, tat-type signal; it reads MRLTQAPPSRRTLMTLGAGATMAALLPAGGAAYA. Residue serine 87 is the Acyl-ester intermediate of the active site. Residue 255–257 participates in substrate binding; the sequence is KTG.

This sequence belongs to the class-A beta-lactamase family. In terms of processing, predicted to be exported by the Tat system. The position of the signal peptide cleavage has not been experimentally proven.

It catalyses the reaction a beta-lactam + H2O = a substituted beta-amino acid. The polypeptide is Beta-lactamase (bla) (Kitasatospora aureofaciens (Streptomyces aureofaciens)).